Here is a 641-residue protein sequence, read N- to C-terminus: SUMO-activating enzyme subunit 2 (641 aa).

ATP is bound by residues 24 to 29, D48, 56 to 59, K72, 95 to 96, and 117 to 122; these read GAGGIG, NLNR, SI, and DNNAAR. Residues C158 and C161 each contribute to the Zn(2+) site. Residue C173 is the Glycyl thioester intermediate of the active site. K190 is covalently cross-linked (Glycyl lysine isopeptide (Lys-Gly) (interchain with G-Cter in SUMO)). K236 is covalently cross-linked (Glycyl lysine isopeptide (Lys-Gly) (interchain with G-Cter in SUMO1)). Residues K257 and K275 each participate in a glycyl lysine isopeptide (Lys-Gly) (interchain with G-Cter in SUMO) cross-link. C439 and C442 together coordinate Zn(2+). The interval 546-641 is disordered; the sequence is GDVPEKGPQK…EEDDDIIALD (96 aa). Positions 556–579 are enriched in polar residues; sequence PSEQSVKNITNGSDDGAQPSTSKA. Acidic residues predominate over residues 582 to 594; sequence QDDVLIVDSDEES. Glycyl lysine isopeptide (Lys-Gly) (interchain with G-Cter in SUMO) cross-links involve residues K610, K612, and K623. Residues 630–641 are compositionally biased toward acidic residues; the sequence is PVEEDDDIIALD.

Belongs to the ubiquitin-activating E1 family. In terms of assembly, heterodimer of sae1 and uba2/sae2. The heterodimer corresponds to the two domains that are encoded on a single polypeptide chain in ubiquitin-activating enzyme E1. Interacts with ube2i. In terms of processing, sumoylated with SUMO1 and SUMO2/3 and by UBC9. Sumoylation at Lys-236 inhibits enzymatic activity. Sumoylation at the C-terminal lysine cluster plays an essential role in nuclear trafficking.

The protein resides in the cytoplasm. It is found in the nucleus. The protein operates within protein modification; protein sumoylation. Its function is as follows. The heterodimer acts as an E1 ligase for sumo1, sumo2, and sumo3. It mediates ATP-dependent activation of sumo proteins followed by formation of a thioester bond between a sumo protein and a conserved active site cysteine residue on uba2/sae2. This is SUMO-activating enzyme subunit 2 (uba2) from Xenopus tropicalis (Western clawed frog).